The sequence spans 376 residues: UDP-4-amino-4,6-dideoxy-N-acetyl-beta-L-altrosamine transaminase (376 aa).

Substrate-binding positions include tyrosine 4, 24 to 27 (EILT), alanine 54, and serine 176. Lysine 181 is subject to N6-(pyridoxal phosphate)lysine. Substrate-binding positions include asparagine 226 and 311–314 (QVHY).

Belongs to the DegT/DnrJ/EryC1 family.

The catalysed reaction is UDP-4-amino-4,6-dideoxy-N-acetyl-beta-L-altrosamine + 2-oxoglutarate = UDP-2-acetamido-2,6-dideoxy-beta-L-arabino-hex-4-ulose + L-glutamate. Functionally, catalyzes the second step in the biosynthesis of pseudaminic acid, a sialic-acid-like sugar that is used to modify flagellin. Uses UDP-2-acetamido-2,6-dideoxy-beta-L-arabino-4-hexulose as substrate producing UDP-4-amino-4,6-dideoxy-beta-L-AltNAc. This Campylobacter jejuni subsp. jejuni serotype O:2 (strain ATCC 700819 / NCTC 11168) protein is UDP-4-amino-4,6-dideoxy-N-acetyl-beta-L-altrosamine transaminase (pseC).